The primary structure comprises 455 residues: Ribosomal protein uS12 methylthiotransferase RimO (455 aa).

Residues 10–126 (RKVSMISLGC…ILELIEAHDR (117 aa)) enclose the MTTase N-terminal domain. 6 residues coordinate [4Fe-4S] cluster: Cys-19, Cys-55, Cys-89, Cys-164, Cys-168, and Cys-171. The region spanning 150–380 (SSPFYSTYVK…MKAQQRVSFR (231 aa)) is the Radical SAM core domain. The 69-residue stretch at 383–451 (RALIGRVEPV…EYDLIGEIVD (69 aa)) folds into the TRAM domain.

It belongs to the methylthiotransferase family. RimO subfamily. The cofactor is [4Fe-4S] cluster.

It localises to the cytoplasm. It catalyses the reaction L-aspartate(89)-[ribosomal protein uS12]-hydrogen + (sulfur carrier)-SH + AH2 + 2 S-adenosyl-L-methionine = 3-methylsulfanyl-L-aspartate(89)-[ribosomal protein uS12]-hydrogen + (sulfur carrier)-H + 5'-deoxyadenosine + L-methionine + A + S-adenosyl-L-homocysteine + 2 H(+). Catalyzes the methylthiolation of an aspartic acid residue of ribosomal protein uS12. This chain is Ribosomal protein uS12 methylthiotransferase RimO, found in Syntrophotalea carbinolica (strain DSM 2380 / NBRC 103641 / GraBd1) (Pelobacter carbinolicus).